Consider the following 389-residue polypeptide: Acetylornithine aminotransferase (389 aa).

Pyridoxal 5'-phosphate is bound by residues 104–105 (GT) and Phe-131. Residue Arg-134 participates in N(2)-acetyl-L-ornithine binding. Position 216-219 (216-219 (DEVQ)) interacts with pyridoxal 5'-phosphate. The residue at position 245 (Lys-245) is an N6-(pyridoxal phosphate)lysine. Ser-273 contributes to the N(2)-acetyl-L-ornithine binding site. Thr-274 is a pyridoxal 5'-phosphate binding site.

The protein belongs to the class-III pyridoxal-phosphate-dependent aminotransferase family. ArgD subfamily. In terms of assembly, homodimer. The cofactor is pyridoxal 5'-phosphate.

Its subcellular location is the cytoplasm. The enzyme catalyses N(2)-acetyl-L-ornithine + 2-oxoglutarate = N-acetyl-L-glutamate 5-semialdehyde + L-glutamate. It participates in amino-acid biosynthesis; L-arginine biosynthesis; N(2)-acetyl-L-ornithine from L-glutamate: step 4/4. The sequence is that of Acetylornithine aminotransferase from Methanopyrus kandleri (strain AV19 / DSM 6324 / JCM 9639 / NBRC 100938).